A 509-amino-acid polypeptide reads, in one-letter code: Lanosterol 14-alpha demethylase (509 aa).

A helical membrane pass occupies residues 30 to 50 (GNLLSMLLIACAFTLSLVYLI). Residue Cys455 coordinates heme.

This sequence belongs to the cytochrome P450 family. It depends on heme as a cofactor. In terms of processing, ubiquitinated by MARCHF6, leading to proteasomal degradation. Ubiquitously expressed with highest levels in testis, ovary, adrenal, prostate, liver, kidney and lung.

The protein localises to the endoplasmic reticulum membrane. Its subcellular location is the microsome membrane. It carries out the reaction a 14alpha-methyl steroid + 3 reduced [NADPH--hemoprotein reductase] + 3 O2 = a Delta(14) steroid + formate + 3 oxidized [NADPH--hemoprotein reductase] + 4 H2O + 4 H(+). The catalysed reaction is lanosterol + 3 reduced [NADPH--hemoprotein reductase] + 3 O2 = 4,4-dimethyl-5alpha-cholesta-8,14,24-trien-3beta-ol + formate + 3 oxidized [NADPH--hemoprotein reductase] + 4 H2O + 4 H(+). It catalyses the reaction 24,25-dihydrolanosterol + 3 reduced [NADPH--hemoprotein reductase] + 3 O2 = 4,4-dimethyl-8,14-cholestadien-3beta-ol + formate + 3 oxidized [NADPH--hemoprotein reductase] + 4 H2O + 4 H(+). The enzyme catalyses a 14alpha-methyl steroid + reduced [NADPH--hemoprotein reductase] + O2 = a 14alpha-hydroxymethyl steroid + oxidized [NADPH--hemoprotein reductase] + H2O + H(+). It carries out the reaction a 14alpha-hydroxymethyl steroid + reduced [NADPH--hemoprotein reductase] + O2 = a 14alpha-formyl steroid + oxidized [NADPH--hemoprotein reductase] + 2 H2O + H(+). The catalysed reaction is a 14alpha-formyl steroid + reduced [NADPH--hemoprotein reductase] + O2 = a Delta(14) steroid + formate + oxidized [NADPH--hemoprotein reductase] + H2O + 2 H(+). It catalyses the reaction lanosterol + reduced [NADPH--hemoprotein reductase] + O2 = 32-hydroxylanosterol + oxidized [NADPH--hemoprotein reductase] + H2O + H(+). The enzyme catalyses 32-hydroxylanosterol + reduced [NADPH--hemoprotein reductase] + O2 = 32-oxolanosterol + oxidized [NADPH--hemoprotein reductase] + 2 H2O + H(+). It carries out the reaction 32-oxolanosterol + reduced [NADPH--hemoprotein reductase] + O2 = 4,4-dimethyl-5alpha-cholesta-8,14,24-trien-3beta-ol + formate + oxidized [NADPH--hemoprotein reductase] + H2O + 2 H(+). The catalysed reaction is 24,25-dihydrolanosterol + reduced [NADPH--hemoprotein reductase] + O2 = 32-hydroxy-24,25-dihydrolanosterol + oxidized [NADPH--hemoprotein reductase] + H2O + H(+). It catalyses the reaction 32-hydroxy-24,25-dihydrolanosterol + reduced [NADPH--hemoprotein reductase] + O2 = 32-oxo-24,25-dihydrolanosterol + oxidized [NADPH--hemoprotein reductase] + 2 H2O + H(+). The enzyme catalyses 32-oxo-24,25-dihydrolanosterol + reduced [NADPH--hemoprotein reductase] + O2 = 4,4-dimethyl-8,14-cholestadien-3beta-ol + formate + oxidized [NADPH--hemoprotein reductase] + H2O + 2 H(+). It participates in steroid biosynthesis; zymosterol biosynthesis; zymosterol from lanosterol: step 1/6. With respect to regulation, inhibited by azalanstat. Inhibited by azole antifungal agents ketoconazole, itraconazole and fluconazole. Functionally, sterol 14alpha-demethylase that plays a critical role in the cholesterol biosynthesis pathway, being cholesterol the major sterol component in mammalian membranes as well as a precursor for bile acid and steroid hormone synthesis. Cytochrome P450 monooxygenase that catalyzes the three-step oxidative removal of the 14alpha-methyl group (C-32) of sterols such as lanosterol (lanosta-8,24-dien-3beta-ol) and 24,25-dihydrolanosterol (DHL) in the form of formate, and converts the sterols to 4,4-dimethyl-5alpha-cholesta-8,14,24-trien-3beta-ol and 4,4-dimethyl-8,14-cholestadien-3beta-ol, respectively, which are intermediates of cholesterol biosynthesis. Can also demethylate substrates not intrinsic to mammals, such as eburicol (24-methylene-24,25-dihydrolanosterol), but at a lower rate than DHL. This Homo sapiens (Human) protein is Lanosterol 14-alpha demethylase.